The primary structure comprises 947 residues: MIGALARRLFGSPNDRRIKAYQPRVDAINALEPELVALSDEALRGRTAEFRQQLADGKTLDDILVPAFATVREAAKRTLGQRHFDVQLIGGMVLHEGDIAEMKTGEGKTLVATLAVYLNALAGKGVHVVTVNDYLARRDSAWMGEIYGFLGMTTGVIVHGLDDQQRQAAYACDITYGTNNEYGFDYLRDNMKYRLEDMVQRGHYYAIVDEVDSILIDEARTPLIISGPLDDRSEFYNTIDTFMPSLDKATDYEVDEKQRTVTLTEAGMEHIEVLLRDAGQLKGDSLYDVENVSVVHHVNQALRAHSLFQRDKDYIVRDDEVVIIDEFTGRMMPGRRYSEGLHQALEAKEHVQVQPENQTLASITFQNYFRMYEKLSGMTGTALTEADELFDIYKLEVVEIPTNVQIARLDEDDEVYRTQSEKYAAILAEVERANSRLQPVLVGTASIEKSEVLGEYLKKHGYKQIDFTDPKGMEKLYAAARAGKPAKLFAVLNARFHEQEAYIVAEAGVPGAITIATNMAGRGTDIKLGGSLEMRIQHETVGITDEAEKAAKIELIKADIERFREIVLKAEEVVEVEPAKGNKPAKTLTRPGGLYIMGSERHESRRIDNQLRGRSGRQGDPGRSKFFLSLEDDLMRIFGSDRLDTMLTRLGLKEGEAIIHPWINKALEKAQQKVEARNFDIRKNLLKFDNVQNDQRKEIFDHRISLMKDDSVAETVAGMRHDFIDDIVAKHVPEHAYAEQWDVAGLKEELERVLGLDLPVDEWAKEEGIADEELLTRIEQRVDEHMAAKVGQWGPEVMRYAEKSILLQTLDHLWREHLVMLDHLRNVIGLRGYGQRDPLQEYKSEAFALFEAMITHLREAVTAQLMRVEIVPPEQPQELPPMEGHKFNADTGEDDMAFANVSLAPADNADKTARNPNDPSTWGKVGRNEDCPCGSGKKYKHCHGRYA.

Residues Q87, 105-109 (GEGKT), and D525 each bind ATP. The tract at residues 905-928 (PADNADKTARNPNDPSTWGKVGRN) is disordered. Positions 931, 933, 942, and 943 each coordinate Zn(2+).

It belongs to the SecA family. Monomer and homodimer. Part of the essential Sec protein translocation apparatus which comprises SecA, SecYEG and auxiliary proteins SecDF-YajC and YidC. Zn(2+) serves as cofactor.

It localises to the cell inner membrane. The protein localises to the cytoplasm. The catalysed reaction is ATP + H2O + cellular proteinSide 1 = ADP + phosphate + cellular proteinSide 2.. Functionally, part of the Sec protein translocase complex. Interacts with the SecYEG preprotein conducting channel. Has a central role in coupling the hydrolysis of ATP to the transfer of proteins into and across the cell membrane, serving both as a receptor for the preprotein-SecB complex and as an ATP-driven molecular motor driving the stepwise translocation of polypeptide chains across the membrane. The protein is Protein translocase subunit SecA of Rhodopseudomonas palustris (strain BisB18).